The following is a 492-amino-acid chain: 2-succinylbenzoate--CoA ligase (492 aa).

Belongs to the ATP-dependent AMP-binding enzyme family. MenE subfamily.

The catalysed reaction is 2-succinylbenzoate + ATP + CoA = 2-succinylbenzoyl-CoA + AMP + diphosphate. It functions in the pathway quinol/quinone metabolism; 1,4-dihydroxy-2-naphthoate biosynthesis; 1,4-dihydroxy-2-naphthoate from chorismate: step 5/7. Its pathway is quinol/quinone metabolism; menaquinone biosynthesis. In terms of biological role, converts 2-succinylbenzoate (OSB) to 2-succinylbenzoyl-CoA (OSB-CoA). The chain is 2-succinylbenzoate--CoA ligase from Geobacillus sp. (strain WCH70).